The chain runs to 270 residues: tRNA pseudouridine synthase A (270 aa).

Aspartate 60 (nucleophile) is an active-site residue. Residues phenylalanine 107–phenylalanine 111 form an RNA binding region. Residue tyrosine 118 coordinates substrate. The segment at glutamine 168–arginine 172 is interaction with tRNA.

This sequence belongs to the tRNA pseudouridine synthase TruA family. Homodimer.

It catalyses the reaction uridine(38/39/40) in tRNA = pseudouridine(38/39/40) in tRNA. Formation of pseudouridine at positions 38, 39 and 40 in the anticodon stem and loop of transfer RNAs. The chain is tRNA pseudouridine synthase A from Citrobacter koseri (strain ATCC BAA-895 / CDC 4225-83 / SGSC4696).